The sequence spans 93 residues: Putative regulatory protein Cthe_1316 (93 aa).

A disordered region spans residues 74 to 93; sequence RLNTKEAEDVEVDDEEEIDE. Residues 81-93 show a composition bias toward acidic residues; it reads EDVEVDDEEEIDE.

Belongs to the RemA family.

The sequence is that of Putative regulatory protein Cthe_1316 from Acetivibrio thermocellus (strain ATCC 27405 / DSM 1237 / JCM 9322 / NBRC 103400 / NCIMB 10682 / NRRL B-4536 / VPI 7372) (Clostridium thermocellum).